A 625-amino-acid polypeptide reads, in one-letter code: Isocitrate dehydrogenase kinase/phosphatase (625 aa).

ATP-binding positions include 325–331 (APGIKGM) and Lys-346. Residue Asp-381 is part of the active site. The interval 596–625 (RRHSPGRNDHELLTHLPPEPMLTGLSGMTP) is disordered.

The protein belongs to the AceK family.

Its subcellular location is the cytoplasm. It catalyses the reaction L-seryl-[isocitrate dehydrogenase] + ATP = O-phospho-L-seryl-[isocitrate dehydrogenase] + ADP + H(+). Functionally, bifunctional enzyme which can phosphorylate or dephosphorylate isocitrate dehydrogenase (IDH) on a specific serine residue. This is a regulatory mechanism which enables bacteria to bypass the Krebs cycle via the glyoxylate shunt in response to the source of carbon. When bacteria are grown on glucose, IDH is fully active and unphosphorylated, but when grown on acetate or ethanol, the activity of IDH declines drastically concomitant with its phosphorylation. The protein is Isocitrate dehydrogenase kinase/phosphatase of Polaromonas sp. (strain JS666 / ATCC BAA-500).